The following is a 312-amino-acid chain: MNTPSDETRKPPQGKRFAERLPKWLRQVLPTGPVFAQTDTTIKRTGMATVCEEALCPNRACCWSRKTATYLALGDACTRRCGFCNIDFTKKPISPDPEEPQKIAESAKILQLKHIVLTMVARDDLEDGGASFLVRIIDTLHQELPESTVEVLASDFQGNIDALHTLLDSGLTIYNHNVETVERLTPVVRHKATYRRSLFMLEQAAMYLPDLKIKSGIMVGLGEQESEVKQTLKDLADHGVKIVTIGQYLRPSRSHIPVKSYVTPETFDYYRTIGTSLGLFVYAGPFVRSSFNADIVLHNLENKQSDVAKMQN.

[4Fe-4S] cluster-binding residues include cysteine 51, cysteine 56, cysteine 62, cysteine 77, cysteine 81, cysteine 84, and serine 290. The 218-residue stretch at 63-280 (WSRKTATYLA…RTIGTSLGLF (218 aa)) folds into the Radical SAM core domain.

It belongs to the radical SAM superfamily. Lipoyl synthase family. The cofactor is [4Fe-4S] cluster.

The protein localises to the cytoplasm. The catalysed reaction is [[Fe-S] cluster scaffold protein carrying a second [4Fe-4S](2+) cluster] + N(6)-octanoyl-L-lysyl-[protein] + 2 oxidized [2Fe-2S]-[ferredoxin] + 2 S-adenosyl-L-methionine + 4 H(+) = [[Fe-S] cluster scaffold protein] + N(6)-[(R)-dihydrolipoyl]-L-lysyl-[protein] + 4 Fe(3+) + 2 hydrogen sulfide + 2 5'-deoxyadenosine + 2 L-methionine + 2 reduced [2Fe-2S]-[ferredoxin]. Its pathway is protein modification; protein lipoylation via endogenous pathway; protein N(6)-(lipoyl)lysine from octanoyl-[acyl-carrier-protein]: step 2/2. In terms of biological role, catalyzes the radical-mediated insertion of two sulfur atoms into the C-6 and C-8 positions of the octanoyl moiety bound to the lipoyl domains of lipoate-dependent enzymes, thereby converting the octanoylated domains into lipoylated derivatives. In Chlamydia caviae (strain ATCC VR-813 / DSM 19441 / 03DC25 / GPIC) (Chlamydophila caviae), this protein is Lipoyl synthase.